The sequence spans 219 residues: uncharacterized protein (219 aa).

The Cytoplasmic portion of the chain corresponds to 1–15; the sequence is MLKLTTTSVTFHVLR. Residues 16–36 traverse the membrane as a helical segment; it reads YFQLGLSVTNLLLASFAIITN. Residues 37–41 lie on the Vacuolar side of the membrane; that stretch reads YKVDR. The chain crosses the membrane as a helical span at residues 42–62; that stretch reads ILRLSLAVSIISSVYFGIVRF. Leu63 is a topological domain (cytoplasmic). The helical transmembrane segment at 64-84 threads the bilayer; sequence PVLLIFVMEIVQTVLWFTAFV. At 85–116 the chain is on the vacuolar side; that stretch reads TLASKFGSMSCSSMPRGINFDYSGSCKIAKID. Residues 117–137 form a helical membrane-spanning segment; sequence ILPEAVLFILFLATTYASYIT. Topologically, residues 138-219 are cytoplasmic; the sequence is VLSQAKENGS…VIDGSIEHSS (82 aa). Residues 176–219 form a disordered region; sequence PLLDLEVQEDARTETESIEDSTDSEDNANIEQEKVIDGSIEHSS. The segment covering 191 to 203 has biased composition (acidic residues); it reads ESIEDSTDSEDNA. The segment covering 206 to 219 has biased composition (basic and acidic residues); sequence EQEKVIDGSIEHSS.

It localises to the vacuole membrane. This is an uncharacterized protein from Saccharomyces cerevisiae (strain ATCC 204508 / S288c) (Baker's yeast).